Here is a 106-residue protein sequence, read N- to C-terminus: MKVLVVVALLVTLISYSSSEGIDDLEADELLSLMANEQTRKECIPKHHECTSNKHGCCRGNFFKYKCQCTTVVTQDGEQTERCFCGTPPHHKAAELVVGFGKKIFG.

Positions 1-19 (MKVLVVVALLVTLISYSSS) are cleaved as a signal peptide. Positions 20 to 40 (EGIDDLEADELLSLMANEQTR) are excised as a propeptide. Cystine bridges form between Cys-43/Cys-58, Cys-50/Cys-67, Cys-57/Cys-85, and Cys-69/Cys-83.

This sequence belongs to the neurotoxin 19 (CSTX) family. 04 (U1-Lctx) subfamily. Expressed by the venom gland.

The protein localises to the secreted. The polypeptide is U1-lycotoxin-Ls1b (Lycosa singoriensis (Wolf spider)).